The sequence spans 398 residues: Minor capsid protein (398 aa).

The segment at Glu-359–Gln-398 is disordered. A compositionally biased stretch (polar residues) spans Ser-362–Pro-372. Low complexity predominate over residues Ala-373–Ala-382.

The protein belongs to the T7virus minor capsid protein family. In terms of assembly, interacts with the connector protein and the major capsid protein.

It is found in the virion. In terms of biological role, assembles with the major capsid protein to form an icosahedral capsid with a T=7 symmetry, about 60 nm in diameter, and consisting of 415 capsid proteins. The major and minor capsid proteins are incorporated into the capsid in about a 90/10 ratio respectively. Once the capsid formed, encapsidates one single copy of the viral genome. The sequence is that of Minor capsid protein from Escherichia coli (Bacteriophage T7).